The chain runs to 231 residues: Ribosome maturation factor RimM (231 aa).

Residues 1-29 (MSERDSGSSGRAKAKRQPGAKAPFGPFVR) form a disordered region. Residues 150–231 (TDEYYWVDLV…KIIVDWEADY (82 aa)) enclose the PRC barrel domain.

This sequence belongs to the RimM family. Binds ribosomal protein uS19.

The protein resides in the cytoplasm. An accessory protein needed during the final step in the assembly of 30S ribosomal subunit, possibly for assembly of the head region. Essential for efficient processing of 16S rRNA. May be needed both before and after RbfA during the maturation of 16S rRNA. It has affinity for free ribosomal 30S subunits but not for 70S ribosomes. This is Ribosome maturation factor RimM from Paraburkholderia phymatum (strain DSM 17167 / CIP 108236 / LMG 21445 / STM815) (Burkholderia phymatum).